The chain runs to 142 residues: Large ribosomal subunit protein uL11 (142 aa).

This sequence belongs to the universal ribosomal protein uL11 family. In terms of assembly, part of the ribosomal stalk of the 50S ribosomal subunit. Interacts with L10 and the large rRNA to form the base of the stalk. L10 forms an elongated spine to which L12 dimers bind in a sequential fashion forming a multimeric L10(L12)X complex. In terms of processing, one or more lysine residues are methylated.

Its function is as follows. Forms part of the ribosomal stalk which helps the ribosome interact with GTP-bound translation factors. The sequence is that of Large ribosomal subunit protein uL11 from Rhodopseudomonas palustris (strain HaA2).